Reading from the N-terminus, the 178-residue chain is Interleukin-10 (178 aa).

The signal sequence occupies residues 1–18 (MHSSALLCFLVFLAGVGA). N-linked (GlcNAc...) asparagine glycosylation is present at Asn-29. Intrachain disulfides connect Cys-30-Cys-126 and Cys-80-Cys-132. N-linked (GlcNAc...) asparagine glycosylation occurs at Asn-134.

This sequence belongs to the IL-10 family. As to quaternary structure, homodimer. Interacts with IL10RA and IL10RB.

The protein resides in the secreted. Functionally, major immune regulatory cytokine that acts on many cells of the immune system where it has profound anti-inflammatory functions, limiting excessive tissue disruption caused by inflammation. Mechanistically, IL10 binds to its heterotetrameric receptor comprising IL10RA and IL10RB leading to JAK1 and STAT2-mediated phosphorylation of STAT3. In turn, STAT3 translocates to the nucleus where it drives expression of anti-inflammatory mediators. Targets antigen-presenting cells (APCs) such as macrophages and monocytes and inhibits their release of pro-inflammatory cytokines including granulocyte-macrophage colony-stimulating factor /GM-CSF, granulocyte colony-stimulating factor/G-CSF, IL-1 alpha, IL-1 beta, IL-6, IL-8 and TNF-alpha. Also interferes with antigen presentation by reducing the expression of MHC-class II and co-stimulatory molecules, thereby inhibiting their ability to induce T cell activation. In addition, controls the inflammatory response of macrophages by reprogramming essential metabolic pathways including mTOR signaling. The chain is Interleukin-10 (IL10) from Felis catus (Cat).